The chain runs to 418 residues: MGVVLARGAFRERSMLTLPDFPLPDARGRFGPYGGRYVPETLIPALEELEAAYREAKKDPAFLEELDHYLRQFAGRPTPLYHAKRLSEYWGGAQVFLKREDLLHTGAHKINNTLGQALLARRMGKRRVIAETGAGQHGVSVATVAALFGLECVVYMGEEDVRRQALNVFRMKLLGAEVRPVAAGSRTLKDATNEAIRDWITNVRTTFYILGSVVGPHPYPMMVRDFQSVIGEEVKRQSLELFGRLPDALIAAVGGGSNAIGLFAPFAYLPEGRPKLIGVEAAGEGLSTGRHAASIGAGKRGVLHGSYMYLLYDHDGQITPAHSVSAGLDYPGVGPEHSYYADAGVAEYASVTDEEALEGFKLLARLEGIIPALESAHAIAYAAKVVPEMDKDQVVVINLSGRGDKDVTEVMRLLGGEL.

An N6-(pyridoxal phosphate)lysine modification is found at Lys-109.

Belongs to the TrpB family. Tetramer of two alpha and two beta chains. Pyridoxal 5'-phosphate is required as a cofactor.

The enzyme catalyses (1S,2R)-1-C-(indol-3-yl)glycerol 3-phosphate + L-serine = D-glyceraldehyde 3-phosphate + L-tryptophan + H2O. Its pathway is amino-acid biosynthesis; L-tryptophan biosynthesis; L-tryptophan from chorismate: step 5/5. Its function is as follows. The beta subunit is responsible for the synthesis of L-tryptophan from indole and L-serine. In Thermus thermophilus (strain ATCC 27634 / DSM 579 / HB8), this protein is Tryptophan synthase beta chain.